The chain runs to 465 residues: MSGFWESCLQRFEQELPAQQFNTWIKPLRLEGESTALEDGLRLIAPNGFILKWVRDRYLTRIEDYSRTFFEGPVTIALVIGSGKATAARIQATTTDSGQNAPANPATTSEKRTAASEKARGKGSNYEKSRLFPSFTFDNLVVGKANDLARAAAVQVANNPGGAYNPLFIYGGAGLGKTHLIHAIGNTIATENPEKIVRYVHAEDYYSDVVRAYQQKSFDSFKRTYRSLDVLLLDDVQFFNGKNRSQEEFFFLFNALIEARKQIIITCDTYPKDINGLDDRLVTRFDWGLTVQIEPPELEMRVAILKKKAEAEGIQLDDEVAFFIAKHLRSNVRELEGALKKVLAYSSFHGRVIALDLAKEALKDVIGSVRNVGMDNIQKTVADYYKIKVAELFSKKRTRAIARPRQVAMWLCREVTSHSFPEIGDAFGGRDHTTVIHAVKTIDSLRIKENELNHDLHVLLQVLKG.

The domain I, interacts with DnaA modulators stretch occupies residues M1 to A85. Positions A85–S129 are domain II. Over residues T93–T108 the composition is skewed to polar residues. The interval T93–N125 is disordered. Over residues S109–N125 the composition is skewed to basic and acidic residues. The segment at R130 to S346 is domain III, AAA+ region. ATP contacts are provided by G174, G176, K177, and T178. The domain IV, binds dsDNA stretch occupies residues S347–G465.

Belongs to the DnaA family. In terms of assembly, oligomerizes as a right-handed, spiral filament on DNA at oriC.

It localises to the cytoplasm. Plays an essential role in the initiation and regulation of chromosomal replication. ATP-DnaA binds to the origin of replication (oriC) to initiate formation of the DNA replication initiation complex once per cell cycle. Binds the DnaA box (a 9 base pair repeat at the origin) and separates the double-stranded (ds)DNA. Forms a right-handed helical filament on oriC DNA; dsDNA binds to the exterior of the filament while single-stranded (ss)DNA is stabiized in the filament's interior. The ATP-DnaA-oriC complex binds and stabilizes one strand of the AT-rich DNA unwinding element (DUE), permitting loading of DNA polymerase. After initiation quickly degrades to an ADP-DnaA complex that is not apt for DNA replication. Binds acidic phospholipids. The polypeptide is Chromosomal replication initiator protein DnaA (Dechloromonas aromatica (strain RCB)).